Reading from the N-terminus, the 427-residue chain is Trigger factor (427 aa).

The region spanning 163–248 is the PPIase FKBP-type domain; it reads GDTVVIDFVG…IHEVKTKEVP (86 aa).

Belongs to the FKBP-type PPIase family. Tig subfamily.

The protein localises to the cytoplasm. It carries out the reaction [protein]-peptidylproline (omega=180) = [protein]-peptidylproline (omega=0). Its function is as follows. Involved in protein export. Acts as a chaperone by maintaining the newly synthesized protein in an open conformation. Functions as a peptidyl-prolyl cis-trans isomerase. In Streptococcus pyogenes serotype M49 (strain NZ131), this protein is Trigger factor.